Consider the following 967-residue polypeptide: Regulator of G-protein signaling 3 (967 aa).

Residues 18–95 form the PDZ domain; the sequence is QITIRRGKDG…EIILLVWRVV (78 aa). A disordered region spans residues 115–135; that stretch reads THDLLSPPNKREKNCTHGAPT. Residue R167 is modified to Omega-N-methylarginine. The disordered stretch occupies residues 389 to 705; it reads QLAATPTERK…EGGLSLRVQN (317 aa). Composition is skewed to polar residues over residues 476 to 486, 512 to 549, and 577 to 597; these read LPSSKNPSPSQ, SPSSEDIATCQNPPQSPETSTSKDSPPGQGSSPTTEVP, and SSASDQNVLPSQESPPSQGSL. Positions 650–676 are enriched in acidic residues; it reads GEDEDAEEGEEGEEGEEDEEDDTNDDN. Over residues 677–687 the composition is skewed to basic and acidic residues; the sequence is YGDRNEAKRSS. 4 positions are modified to phosphoserine: S713, S716, S748, and S777. A disordered region spans residues 807 to 830; that stretch reads FRRRNESPGAQPAGKADKTTKSFK. Residues 821-830 show a composition bias toward basic and acidic residues; it reads KADKTTKSFK. The RGS domain occupies 842 to 967; it reads SLEKLLLHKY…INQKKMSPPL (126 aa).

In terms of assembly, binds EFNB1 and EFNB2. Binds the GNB1-GNG2 heterodimer. Binds ESR1. In terms of processing, phosphorylated by cyclic GMP-dependent protein kinase. ISGylated. In terms of tissue distribution, detected in kidney, uterus, ovary, heart, brain, spleen, lung and testis.

The protein resides in the cytoplasm. The protein localises to the membrane. It localises to the nucleus. Functionally, down-regulates signaling from heterotrimeric G-proteins by increasing the GTPase activity of the alpha subunits, thereby driving them into their inactive GDP-bound form. Down-regulates G-protein-mediated release of inositol phosphates and activation of MAP kinases. This is Regulator of G-protein signaling 3 (Rgs3) from Rattus norvegicus (Rat).